Here is a 228-residue protein sequence, read N- to C-terminus: L-ribulose-5-phosphate 4-epimerase UlaF (228 aa).

Residues 26-27 (GN), 43-44 (SG), and 72-73 (SS) contribute to the substrate site. Zn(2+) contacts are provided by aspartate 74, histidine 93, and histidine 95. Aspartate 118 functions as the Proton donor/acceptor in the catalytic mechanism. Residue histidine 167 participates in Zn(2+) binding. Residue tyrosine 225 is the Proton donor/acceptor of the active site.

The protein belongs to the aldolase class II family. AraD/FucA subfamily. Zn(2+) is required as a cofactor.

The enzyme catalyses L-ribulose 5-phosphate = D-xylulose 5-phosphate. It participates in cofactor degradation; L-ascorbate degradation; D-xylulose 5-phosphate from L-ascorbate: step 4/4. Its function is as follows. Catalyzes the isomerization of L-ribulose 5-phosphate to D-xylulose 5-phosphate. Is involved in the anaerobic L-ascorbate utilization. In Salmonella paratyphi A (strain ATCC 9150 / SARB42), this protein is L-ribulose-5-phosphate 4-epimerase UlaF.